Here is a 289-residue protein sequence, read N- to C-terminus: CBY1-interacting BAR domain-containing protein 1 (289 aa).

The N-terminal 47 residues, 1-47, are a transit peptide targeting the mitochondrion; it reads MMRRTLENRNAQTKQLQTAVSNVEKHFGELCQIFAAYVRKTARLRDK. Positions 10-220 are BAR-like; that stretch reads NAQTKQLQTA…NIDEDEDLEV (211 aa). Positions 107–178 form a coiled coil; it reads KMKRDDLKAT…INNFERQKMK (72 aa). Residues 265–289 form a disordered region; that stretch reads LRKDQQAEDDEDDELDVTEEENFLK. Positions 271 to 289 are enriched in acidic residues; that stretch reads AEDDEDDELDVTEEENFLK.

The protein belongs to the CIBAR family. Homodimer (via BAR-like domain). Heterodimer with FAM92B (via BAR-like domains). Interacts (via BAR-like domain) with CBY1; this interaction is required for targeting FAM92A to centriole and cilium basal body. Interacts (via BAR-like domain) with CBY3; both proteins form a ninefold symmetric structure at the flagellar base; are recruited to the annulus in a mutually dependent manner and regulate annulus positionning.

The protein localises to the cytoplasm. It localises to the cytoskeleton. It is found in the microtubule organizing center. The protein resides in the centrosome. Its subcellular location is the centriole. The protein localises to the cilium basal body. It localises to the cell projection. It is found in the cilium. The protein resides in the nucleus. Its subcellular location is the mitochondrion inner membrane. The protein localises to the flagellum. Its function is as follows. Plays a critical role in regulating mitochondrial ultrastructure and function by maintaining the integrity of mitochondrial morphology, particularly the organization of cristae. Preferentially binds to negatively charged phospholipids like cardiolipin and phosphatidylinositol 4,5-bisphosphate enhancing its interaction with mitochondrial membranes. Induces membrane curvature and tubulation, which are critical for maintaining mitochondrial ultrastructure and the organization of cristae. Plays a crucial role in ciliogenesis. May play a role in limb development through its role in ciliogenesis. Plays a key role in the correct positioning of the annulus, a septin-based ring structure in the sperm flagellum, serving both as a physical barrier and a membrane diffusion barrier that separates the midpiece (MP) from the principal piece (PP). This positioning is essential for proper sperm motility and function. Interacts with CBY3 to form a complex which localizes to the curved membrane region of the flagellar pocket. By doing so, may provide stability and rigidity to the periannular membrane to prevent membrane deformation. This function is crucial for halting annulus migration at the proximal end of the fibrous sheath-containing PP. The sequence is that of CBY1-interacting BAR domain-containing protein 1 from Homo sapiens (Human).